We begin with the raw amino-acid sequence, 328 residues long: Tetraacyldisaccharide 4'-kinase (328 aa).

Residue 59–66 participates in ATP binding; that stretch reads TAGGNGKT.

The protein belongs to the LpxK family.

It catalyses the reaction a lipid A disaccharide + ATP = a lipid IVA + ADP + H(+). It participates in glycolipid biosynthesis; lipid IV(A) biosynthesis; lipid IV(A) from (3R)-3-hydroxytetradecanoyl-[acyl-carrier-protein] and UDP-N-acetyl-alpha-D-glucosamine: step 6/6. Its function is as follows. Transfers the gamma-phosphate of ATP to the 4'-position of a tetraacyldisaccharide 1-phosphate intermediate (termed DS-1-P) to form tetraacyldisaccharide 1,4'-bis-phosphate (lipid IVA). The chain is Tetraacyldisaccharide 4'-kinase from Aliivibrio fischeri (strain ATCC 700601 / ES114) (Vibrio fischeri).